Consider the following 287-residue polypeptide: AA14 family lytic polysaccharide monooxygenase A (287 aa).

The N-terminal stretch at 1-18 (MLRILTLSILATSKLASA) is a signal peptide. Residues asparagine 33, asparagine 83, and asparagine 137 are each glycosylated (N-linked (GlcNAc...) asparagine). 3 disulfide bridges follow: cysteine 188-cysteine 193, cysteine 195-cysteine 216, and cysteine 236-cysteine 243. The N-linked (GlcNAc...) asparagine glycan is linked to asparagine 238.

It belongs to the polysaccharide monooxygenase AA14 family. Requires Cu(2+) as cofactor.

The protein localises to the secreted. Functionally, lytic polysaccharide monooxygenase (LPMO) that has a broad substrate specificity with strong oxidative activity on pure amorphous cellulose and xyloglucan and plays as a bifunctional enzyme to decompose some specific network structures formed between cellulose and hemicellulose in the plant cell walls. Catalysis by LPMOs requires the reduction of the active-site copper from Cu(II) to Cu(I) by a reducing agent and H(2)O(2) or O(2) as a cosubstrate. Simultaneously oxidizes cellulose, xylan and xyloglucan in natural hemi/cellulosic substrate such as fibrillated eucalyptus pulp, and releases native and oxidized cello-oligosaccharides, xylo-oligosaccharides and xyloglucan oligosaccharides from this substrate. The cellulolytic/hemicellulolytic activity becomes weaker as the contents of xylan increase in the alkaline-extracted hemi/cellulosic substrates. This is AA14 family lytic polysaccharide monooxygenase A from Talaromyces rugulosus (Penicillium rugulosum).